A 279-amino-acid polypeptide reads, in one-letter code: Bifunctional protein FolD (279 aa).

NADP(+) contacts are provided by residues 162–164 (GRS), Ser-187, and Ile-228.

It belongs to the tetrahydrofolate dehydrogenase/cyclohydrolase family. Homodimer.

The catalysed reaction is (6R)-5,10-methylene-5,6,7,8-tetrahydrofolate + NADP(+) = (6R)-5,10-methenyltetrahydrofolate + NADPH. It carries out the reaction (6R)-5,10-methenyltetrahydrofolate + H2O = (6R)-10-formyltetrahydrofolate + H(+). It functions in the pathway one-carbon metabolism; tetrahydrofolate interconversion. Functionally, catalyzes the oxidation of 5,10-methylenetetrahydrofolate to 5,10-methenyltetrahydrofolate and then the hydrolysis of 5,10-methenyltetrahydrofolate to 10-formyltetrahydrofolate. This is Bifunctional protein FolD from Acidiphilium cryptum (strain JF-5).